An 895-amino-acid chain; its full sequence is GPMGPSGPRGIPGPPGAPGPQGFQGPPGEPGEPGASGPMGPRGPPGPPGKNGDDGEAGKPGRPGERGPPGPQGARGIPGTAGIPGMKGFSGIDGAKGDAGPAGPKGEPGSPGENGAPGQMGPRGIPGERGRPGAPGPAGARGNDGATGAAGPPGPTGPAGPPGFPGAVGAKGEAGPQGARGSEGPQGVRGEPGPPGPAGAAGPAGNPGADGQPGAKGANGAPGIAGAPGFPGARGPSGPQGPSGPPGPKGNSGEPGAPGNKGDTGAKGEPGPTGIQGPPGPAGEEGKRGEPGPIGIPGPPGERGFPGADGVAGPKGPAGERGAPGPAGPKGSPGEAGRPGEAGIPGAKGITGSPGSPGPDGKTGPPGPAGQDGRPGPPGPPGARGQAGVMGFPGPKGAAGEPGKGVPGPPGAVGPAGKDGEAGAQGPPGPAGPAGERGEQGPAGSPGFQGIPGPAGPPGESGKPGEQGVPGDIGAPGPSGARGFPGERGVQGPPGPAGPRSQGAPGIQGMPGERGAAGIPGPKGDRGDAGPKGITGPIGPPGPAGAPGDKGETGPSGPAGPTGARRGEPGPPGPAGFAGPPGADGQPGAKGDAGPPGPAGPAGPPGPIGSVGAPGPKGSAGPPGATGFPGAAGRVGPPGPSGNAGPPGPPGPVGKGPRGETGPAGRPGEAGPPGPPGPAGEKGSPGADGPAGAPGTPGPQGIAGQRGVVGIPGQRGFPGIPGPSGEPGKQGPSGASGERGPPGPVGPPGIAGPPGESGREGSPGAEGSAGRDGSPGPKGDRGETGPAGPPGAPGAPGAPGPVGPAGKSGDRGEAGPAGPAGPIGPVGARGPAGPQGPRGFSGIQGPPGPPGSPGEQGPSGASGPAGPRGPPGSAGAPGKDGINGIPGPIGPPGPR.

The segment at 1-895 is disordered; it reads GPMGPSGPRG…PGPIGPPGPR (895 aa). A compositionally biased stretch (low complexity) spans 20 to 39; the sequence is PQGFQGPPGEPGEPGASGPM. Residues 51–65 are compositionally biased toward basic and acidic residues; that stretch reads NGDDGEAGKPGRPGE. Residue serine 90 is modified to Phosphoserine. Composition is skewed to low complexity over residues 98 to 114 and 137 to 150; these read DAGPAGPKGEPGSPGEN and PAGARGNDGATGAA. The span at 152–164 shows a compositional bias: pro residues; the sequence is PPGPTGPAGPPGF. 6 stretches are compositionally biased toward low complexity: residues 198-237, 302-336, 348-374, 383-399, 553-564, and 575-593; these read AGAAGPAGNPGADGQPGAKGANGAPGIAGAPGFPGARGPS, ERGFPGADGVAGPKGPAGERGAPGPAGPKGSPGEA, KGITGSPGSPGPDGKTGPPGPAGQDGR, ARGQAGVMGFPGPKGAA, TGPSGPAGPTGA, and AGFAGPPGADGQPGAKGDA. Serine 556 is subject to Phosphoserine. The segment covering 595-607 has biased composition (pro residues); the sequence is PPGPAGPAGPPGP. 3 stretches are compositionally biased toward low complexity: residues 608–635, 660–669, and 679–703; these read IGSVGAPGPKGSAGPPGATGFPGAAGRV, ETGPAGRPGE, and AGEKGSPGADGPAGAPGTPGPQGIA. Residues 741 to 751 are compositionally biased toward pro residues; the sequence is PPGPVGPPGIA. Positions 753-768 are enriched in low complexity; the sequence is PPGESGREGSPGAEGS. Positions 787–802 are enriched in pro residues; the sequence is AGPPGAPGAPGAPGPV. Low complexity-rich tracts occupy residues 823-838 and 853-886; these read IGPVGARGPAGPQGPR and PGEQGPSGASGPAGPRGPPGSAGAPGKDGINGIP.

This sequence belongs to the fibrillar collagen family. Trimers of one alpha 2(I) and two alpha 1(I) chains. Post-translationally, prolines at the third position of the tripeptide repeating unit (G-X-Y) are hydroxylated in some or all of the chains. As to expression, forms the fibrils of tendon, ligaments and bones. In bones, the fibrils are mineralized with calcium hydroxyapatite.

The protein resides in the secreted. It localises to the extracellular space. The protein localises to the extracellular matrix. In terms of biological role, type I collagen is a member of group I collagen (fibrillar forming collagen). In Equus sp, this protein is Collagen alpha-1(I) chain.